The primary structure comprises 151 residues: Large ribosomal subunit protein bL9 (151 aa).

This sequence belongs to the bacterial ribosomal protein bL9 family.

In terms of biological role, binds to the 23S rRNA. The polypeptide is Large ribosomal subunit protein bL9 (Mycolicibacterium vanbaalenii (strain DSM 7251 / JCM 13017 / BCRC 16820 / KCTC 9966 / NRRL B-24157 / PYR-1) (Mycobacterium vanbaalenii)).